The following is a 2997-amino-acid chain: Chromodomain-helicase-DNA-binding protein 7 (2997 aa).

The segment at 86 to 144 (PNRMMSNTPGNGLASPHSQYHTPPVPQVPHGGSGGGQMGVYPGMQNERHGQSFVDSSSM) is disordered. Residues 88–106 (RMMSNTPGNGLASPHSQYH) are compositionally biased toward polar residues. Arg-148 is subject to Omega-N-methylarginine. Disordered regions lie at residues 160-186 (YQQQQPQPQPPQPAPSGPPAQGHPQHM), 199-287 (SMQQ…AVRP), 375-419 (QMNT…GSAG), 498-816 (GQQH…KQKE), and 938-959 (REPETERVERPPADDWKKSESS). Over residues 166 to 177 (QPQPPQPAPSGP) the composition is skewed to pro residues. 2 stretches are compositionally biased toward polar residues: residues 199 to 224 (SMQQHGQPQQRMSQFSQGQEGLNQGN) and 238 to 255 (VPQQSPSMAPSLRHSVQQ). Asymmetric dimethylarginine is present on Arg-286. Polar residues predominate over residues 375 to 390 (QMNTQTMHPSQPQGTY). Residues 498-510 (GQQHPGQQPSFQQ) are compositionally biased toward low complexity. Basic and acidic residues predominate over residues 607 to 620 (VAEDPSKGFGKDDF). Polar residues predominate over residues 627-636 (QELNRNSLDG). Ser-637 is subject to Phosphoserine. 2 stretches are compositionally biased toward basic and acidic residues: residues 650 to 682 (KKDPKEPKEPKEKKEPKEPKTPKAPKIPKEPKE) and 717 to 729 (GKTEGSENSDLDK). Ser-725 bears the Phosphoserine mark. The span at 746 to 758 (QKRRSSRQVKRKR) shows a compositional bias: basic residues. Over residues 759 to 769 (YTEDLEFKISD) the composition is skewed to basic and acidic residues. A compositionally biased stretch (polar residues) spans 782 to 794 (SPSNTSQSEQQES). Chromo domains are found at residues 800–867 (PVVE…GQNK) and 882–947 (VEVD…RVER). The region spanning 980–1154 (LFNWYNMRNC…FSLLHFLEPS (175 aa)) is the Helicase ATP-binding domain. 993–1000 (DEMGLGKT) is an ATP binding site. Residues 1105–1108 (DEAH) carry the DEAH box motif. In terms of domain architecture, Helicase C-terminal spans 1294–1464 (LIDKLLPKLK…LSKKEIEDLL (171 aa)). Disordered regions lie at residues 1576–1600 (FSDLESDSEEKPCAKPRRPQDKSQG) and 1837–1863 (DMLADGGDGGEFDREDEDPEYKPTRTP). Phosphoserine is present on residues Ser-1577 and Ser-1581. The span at 1584–1596 (EEKPCAKPRRPQD) shows a compositional bias: basic and acidic residues. The segment covering 1844–1855 (DGGEFDREDEDP) has biased composition (acidic residues). Ser-1874 carries the post-translational modification Phosphoserine. Composition is skewed to basic and acidic residues over residues 2170-2189 (QAEGKVEEPENPAAKEKCEG) and 2198-2207 (GSGKESKQEC). A disordered region spans residues 2170 to 2290 (QAEGKVEEPE…DETRDGFYME (121 aa)). A phosphoserine mark is found at Ser-2231, Ser-2233, Ser-2237, Ser-2251, Ser-2272, Ser-2275, Ser-2356, and Ser-2395. A compositionally biased stretch (acidic residues) spans 2237–2251 (SEEDEEEKLEDDDKS). A coiled-coil region spans residues 2401–2431 (RRRRRKIEIEAERAAKRRNLMEMVAQLRESQ). Phosphothreonine is present on Thr-2472. A phosphoserine mark is found at Ser-2533 and Ser-2535. A Phosphothreonine modification is found at Thr-2551. 2 positions are modified to phosphoserine: Ser-2559 and Ser-2619. The segment covering 2823–2832 (ATGNTTTASS) has biased composition (low complexity). 2 disordered regions span residues 2823 to 2872 (ATGN…SANG) and 2935 to 2997 (EEKA…ENDE). Composition is skewed to basic and acidic residues over residues 2839-2849 (STSKGEEKGNE) and 2935-2951 (EEKAADKAEGGPFKDGE). Ser-2956 and Ser-2961 each carry phosphoserine. Acidic residues predominate over residues 2970–2997 (LLEDEIAQGEELDSLDGGDEIENNENDE).

Belongs to the SNF2/RAD54 helicase family. In terms of assembly, may interact with CTCF. Interacts with CHD8. Interacts with FAM124B. Found in a complex composed of AGO2, CHD7 and ARB2A. Interacts with TLK2. In terms of tissue distribution, widely expressed in fetal and adult tissues.

Its subcellular location is the nucleus. It localises to the nucleolus. It catalyses the reaction ATP + H2O = ADP + phosphate + H(+). Its function is as follows. ATP-dependent chromatin-remodeling factor, slides nucleosomes along DNA; nucleosome sliding requires ATP. Probable transcription regulator. May be involved in the in 45S precursor rRNA production. This chain is Chromodomain-helicase-DNA-binding protein 7 (CHD7), found in Homo sapiens (Human).